Reading from the N-terminus, the 176-residue chain is ATP-dependent protease subunit HslV (176 aa).

Residue threonine 5 is part of the active site. Residues serine 161, cysteine 164, and threonine 167 each contribute to the Na(+) site.

This sequence belongs to the peptidase T1B family. HslV subfamily. In terms of assembly, a double ring-shaped homohexamer of HslV is capped on each side by a ring-shaped HslU homohexamer. The assembly of the HslU/HslV complex is dependent on binding of ATP.

Its subcellular location is the cytoplasm. It catalyses the reaction ATP-dependent cleavage of peptide bonds with broad specificity.. Its activity is regulated as follows. Allosterically activated by HslU binding. Protease subunit of a proteasome-like degradation complex believed to be a general protein degrading machinery. The sequence is that of ATP-dependent protease subunit HslV from Desulfitobacterium hafniense (strain Y51).